The primary structure comprises 305 residues: MSVDPACPQSLPCFEASDCKESSPMPVICGPEENYPSLQMSSAEMPHTETVSPLPSSMDLLIQDSPDSSTSPKGKQPTSAEKSVAKKEDKVPVKKQKTRTVFSSTQLCVLNDRFQRQKYLSLQQMQELSNILNLSYKQVKTWFQNQRMKSKRWQKNNWPKNSNGVTQKASAPTYPSLYSSYHQGCLVNPTGNLPMWSNQTWNNSTWSNQTQNIQSWSNHSWNTQTWCTQSWNNQAWNSPFYNCGEESLQSCMQFQPNSPASDLEAALEAAGEGLNVIQQTTRYFSTPQTMDLFLNYSMNMQPEDV.

The interval 1–96 is disordered; sequence MSVDPACPQS…KEDKVPVKKQ (96 aa). Residues 65–81 show a composition bias toward polar residues; the sequence is SPDSSTSPKGKQPTSAE. The span at 83–92 shows a compositional bias: basic and acidic residues; sequence SVAKKEDKVP. A DNA-binding region (homeobox) is located at residues 95-154; it reads KQKTRTVFSSTQLCVLNDRFQRQKYLSLQQMQELSNILNLSYKQVKTWFQNQRMKSKRWQ. The required for DNA-binding stretch occupies residues 122-151; the sequence is LQQMQELSNILNLSYKQVKTWFQNQRMKSK. A run of 8 repeats spans residues 196-200, 201-205, 206-210, 216-220, 221-225, 226-230, 231-235, and 236-240. The tract at residues 196-240 is 8 X repeats starting with a Trp in each unit; it reads WSNQTWNNSTWSNQTQNIQSWSNHSWNTQTWCTQSWNNQAWNSPF. The interval 196–240 is sufficient for transactivation activity; sequence WSNQTWNNSTWSNQTQNIQSWSNHSWNTQTWCTQSWNNQAWNSPF. The segment at 241 to 305 is sufficient for strong transactivation activity; the sequence is YNCGEESLQS…YSMNMQPEDV (65 aa).

The protein belongs to the Nanog homeobox family. In terms of assembly, interacts with SMAD1. Interacts with SALL4. Interacts with ZNF281/ZFP281. Interacts with PCGF1. Interacts with ESRRB; reciprocally modulates their transcriptional activities. Interacts with NSD2. Expressed in testicular carcinoma and derived germ cell tumors (at protein level). Expressed in fetal gonads, ovary and testis. Also expressed in ovary teratocarcinoma cell line and testicular embryonic carcinoma. Not expressed in many somatic organs and oocytes.

It is found in the nucleus. Functionally, transcription regulator involved in inner cell mass and embryonic stem (ES) cells proliferation and self-renewal. Imposes pluripotency on ES cells and prevents their differentiation towards extraembryonic endoderm and trophectoderm lineages. Blocks bone morphogenetic protein-induced mesoderm differentiation of ES cells by physically interacting with SMAD1 and interfering with the recruitment of coactivators to the active SMAD transcriptional complexes. Acts as a transcriptional activator or repressor. Binds optimally to the DNA consensus sequence 5'-TAAT[GT][GT]-3' or 5'-[CG][GA][CG]C[GC]ATTAN[GC]-3'. Binds to the POU5F1/OCT4 promoter. Able to autorepress its expression in differentiating (ES) cells: binds to its own promoter following interaction with ZNF281/ZFP281, leading to recruitment of the NuRD complex and subsequent repression of expression. When overexpressed, promotes cells to enter into S phase and proliferation. The chain is Homeobox protein NANOG (NANOG) from Homo sapiens (Human).